Here is a 296-residue protein sequence, read N- to C-terminus: Acetylglutamate kinase (296 aa).

Substrate contacts are provided by residues 66–67 (GG), Arg88, and Asn191.

It belongs to the acetylglutamate kinase family. ArgB subfamily.

Its subcellular location is the cytoplasm. The catalysed reaction is N-acetyl-L-glutamate + ATP = N-acetyl-L-glutamyl 5-phosphate + ADP. It functions in the pathway amino-acid biosynthesis; L-arginine biosynthesis; N(2)-acetyl-L-ornithine from L-glutamate: step 2/4. Its function is as follows. Catalyzes the ATP-dependent phosphorylation of N-acetyl-L-glutamate. The protein is Acetylglutamate kinase of Lawsonia intracellularis (strain PHE/MN1-00).